Reading from the N-terminus, the 144-residue chain is Nucleoside diphosphate kinase (144 aa).

ATP is bound by residues Lys5, Phe53, Arg81, Thr87, Arg98, and Asn108. The Pros-phosphohistidine intermediate role is filled by His111.

The protein belongs to the NDK family. The cofactor is Mg(2+).

The catalysed reaction is a 2'-deoxyribonucleoside 5'-diphosphate + ATP = a 2'-deoxyribonucleoside 5'-triphosphate + ADP. The enzyme catalyses a ribonucleoside 5'-diphosphate + ATP = a ribonucleoside 5'-triphosphate + ADP. Its function is as follows. Major role in the synthesis of nucleoside triphosphates other than ATP. The ATP gamma phosphate is transferred to the NDP beta phosphate via a ping-pong mechanism, using a phosphorylated active-site intermediate. This is Nucleoside diphosphate kinase from Solanum lycopersicum (Tomato).